Consider the following 414-residue polypeptide: Tyrosine--tRNA ligase (414 aa).

An L-tyrosine-binding site is contributed by Y38. The 'HIGH' region signature appears at 43–52 (PTAISLHLGN). The L-tyrosine site is built by Y165 and Q169. The 'KMSKS' region signature appears at 227–231 (KIGKS). Residue K230 coordinates ATP. One can recognise an S4 RNA-binding domain in the interval 349-413 (DDLFLTLVDS…KGKKQYWVIY (65 aa)).

Belongs to the class-I aminoacyl-tRNA synthetase family. TyrS type 1 subfamily. In terms of assembly, homodimer.

The protein localises to the cytoplasm. It catalyses the reaction tRNA(Tyr) + L-tyrosine + ATP = L-tyrosyl-tRNA(Tyr) + AMP + diphosphate + H(+). Its function is as follows. Catalyzes the attachment of tyrosine to tRNA(Tyr) in a two-step reaction: tyrosine is first activated by ATP to form Tyr-AMP and then transferred to the acceptor end of tRNA(Tyr). In Mycoplasmopsis pulmonis (strain UAB CTIP) (Mycoplasma pulmonis), this protein is Tyrosine--tRNA ligase.